The chain runs to 166 residues: Probable DHNTP pyrophosphohydrolase (166 aa).

The region spanning 42–166 is the Nudix hydrolase domain; it reads DLQLSASALV…FKKYYRYKNI (125 aa). The short motif at 73–94 is the Nudix box element; it reads GHVELKESPLDTAIREFHEETG. 2 residues coordinate Mg(2+): Glu88 and Glu92.

This sequence belongs to the Nudix hydrolase family. As to quaternary structure, monomer. Mg(2+) serves as cofactor.

Its pathway is cofactor biosynthesis; tetrahydrofolate biosynthesis; 2-amino-4-hydroxy-6-hydroxymethyl-7,8-dihydropteridine diphosphate from 7,8-dihydroneopterin triphosphate: step 1/4. Probably mediates the removal of pyrophosphate from dihydroneopterin triphosphate (DHNTP), a possible step in the pterin branch of the folate synthesis pathway. The polypeptide is Probable DHNTP pyrophosphohydrolase (folQ) (Lactococcus lactis subsp. cremoris (strain MG1363)).